A 419-amino-acid polypeptide reads, in one-letter code: Ribosome biogenesis protein WDR12 homolog (419 aa).

The ubiquitin-like (UBL) domain stretch occupies residues 10 to 91; sequence VQVHLKTKQE…EDSIEIEYVE (82 aa). 7 WD repeats span residues 103–140, 142–184, 191–230, 249–287, 289–328, 334–374, and 378–416; these read LHDD…KLTI, GHTA…NAVE, GHER…AGES, GHRE…IKTE, STNK…GSVV, GHNA…APLY, and GHGE…VENM.

The protein belongs to the WD repeat WDR12/YTM1 family.

The protein localises to the nucleus. It is found in the nucleolus. The protein resides in the nucleoplasm. Functionally, required for maturation of ribosomal RNAs and formation of the large ribosomal subunit. This chain is Ribosome biogenesis protein WDR12 homolog, found in Drosophila mojavensis (Fruit fly).